The chain runs to 342 residues: Tetraacyldisaccharide 4'-kinase (342 aa).

68 to 75 (TVGGTGKT) is a binding site for ATP.

It belongs to the LpxK family.

The enzyme catalyses a lipid A disaccharide + ATP = a lipid IVA + ADP + H(+). It participates in glycolipid biosynthesis; lipid IV(A) biosynthesis; lipid IV(A) from (3R)-3-hydroxytetradecanoyl-[acyl-carrier-protein] and UDP-N-acetyl-alpha-D-glucosamine: step 6/6. In terms of biological role, transfers the gamma-phosphate of ATP to the 4'-position of a tetraacyldisaccharide 1-phosphate intermediate (termed DS-1-P) to form tetraacyldisaccharide 1,4'-bis-phosphate (lipid IVA). The sequence is that of Tetraacyldisaccharide 4'-kinase from Burkholderia cenocepacia (strain ATCC BAA-245 / DSM 16553 / LMG 16656 / NCTC 13227 / J2315 / CF5610) (Burkholderia cepacia (strain J2315)).